The sequence spans 477 residues: ETS translocation variant 1 (477 aa).

Ser94 carries the post-translational modification Phosphoserine. Residues 128 to 179 (PQVGMRPSNPPTPSSTPVSPLHHASPNSTHTPKPDRAFPAHLPPSQSIPDSS) are disordered. Residues Ser191 and Ser216 each carry the phosphoserine; by RPS6KA1 and RPS6KA5 modification. A Glycyl lysine isopeptide (Lys-Gly) (interchain with G-Cter in SUMO2) cross-link involves residue Lys317. Residues 335–415 (LQLWQFLVAL…AGERYVYKFV (81 aa)) constitute a DNA-binding region (ETS).

The protein belongs to the ETS family. Post-translationally, sumoylated. Phosphorylated at Ser-191 and Ser-216 by RPS6KA1 and RPS6KA5; phosphorylation activates transcriptional activity. Very highly expressed in brain, highly expressed in testis, lung and heart, moderately in spleen, small intestine, pancreas and colon, weakly in liver, prostate and thymus, very weakly in skeletal muscle, kidney and ovary and not in placenta and peripheral blood leukocytes.

It is found in the nucleus. Transcriptional activator that binds to DNA sequences containing the consensus pentanucleotide 5'-CGGA[AT]-3'. Required for olfactory dopaminergic neuron differentiation; may directly activate expression of tyrosine hydroxylase (TH). This Homo sapiens (Human) protein is ETS translocation variant 1.